A 473-amino-acid chain; its full sequence is Arginine biosynthesis bifunctional protein ArgJ, mitochondrial (473 aa).

Substrate contacts are provided by Thr201, Lys230, Thr241, Glu328, Asn468, and Thr473. The active-site Nucleophile is Thr241.

The protein belongs to the ArgJ family. In terms of assembly, heterodimer of an alpha and a beta chain. Post-translationally, the alpha and beta chains are autoproteolytically processed from a single precursor protein within the mitochondrion.

It is found in the mitochondrion matrix. It catalyses the reaction N(2)-acetyl-L-ornithine + L-glutamate = N-acetyl-L-glutamate + L-ornithine. The catalysed reaction is L-glutamate + acetyl-CoA = N-acetyl-L-glutamate + CoA + H(+). The protein operates within amino-acid biosynthesis; L-arginine biosynthesis; L-ornithine and N-acetyl-L-glutamate from L-glutamate and N(2)-acetyl-L-ornithine (cyclic): step 1/1. Its pathway is amino-acid biosynthesis; L-arginine biosynthesis; N(2)-acetyl-L-ornithine from L-glutamate: step 1/4. Catalyzes two activities which are involved in the cyclic version of arginine biosynthesis: the synthesis of acetylglutamate from glutamate and acetyl-CoA, and of ornithine by transacetylation between acetylornithine and glutamate. The sequence is that of Arginine biosynthesis bifunctional protein ArgJ, mitochondrial from Blastomyces gilchristii (strain SLH14081) (Blastomyces dermatitidis).